The chain runs to 309 residues: Assembly-complementing factor 4 (309 aa).

Disordered stretches follow at residues 1-80, 164-240, and 286-309; these read MSED…ASPI, KSIN…ENTP, and VRSE…LFKR. Basic and acidic residues-rich tracts occupy residues 13-24 and 34-44; these read ELHKLSIVDKHS and KQHEVQPESKS. 5 positions are modified to phosphoserine: serine 44, serine 71, serine 74, serine 78, and serine 165. A compositionally biased stretch (polar residues) spans 61 to 80; the sequence is SSPQRSTTNQSPVSDHASPI. Composition is skewed to low complexity over residues 174–188, 205–214, and 222–239; these read NNNV…LPNR, PSRSSESTPT, and PRNT…GENT. The span at 287–298 shows a compositional bias: acidic residues; the sequence is RSEDEDDEEFEP. Serine 288 is subject to Phosphoserine.

In terms of biological role, may be involved in actin cytoskeleton organization and biogenesis. This chain is Assembly-complementing factor 4 (ACF4), found in Saccharomyces cerevisiae (strain ATCC 204508 / S288c) (Baker's yeast).